The following is a 217-amino-acid chain: 4-hydroxy-tetrahydrodipicolinate reductase (217 aa).

NAD(+)-binding positions include 7–12, 71–73, and 95–98; these read GFKGKM, GTT, and SYNF. Catalysis depends on His-127, which acts as the Proton donor/acceptor. A (S)-2,3,4,5-tetrahydrodipicolinate-binding site is contributed by His-128. Lys-131 functions as the Proton donor in the catalytic mechanism. 137 to 138 serves as a coordination point for (S)-2,3,4,5-tetrahydrodipicolinate; that stretch reads GT.

This sequence belongs to the DapB family.

It localises to the cytoplasm. The enzyme catalyses (S)-2,3,4,5-tetrahydrodipicolinate + NAD(+) + H2O = (2S,4S)-4-hydroxy-2,3,4,5-tetrahydrodipicolinate + NADH + H(+). It carries out the reaction (S)-2,3,4,5-tetrahydrodipicolinate + NADP(+) + H2O = (2S,4S)-4-hydroxy-2,3,4,5-tetrahydrodipicolinate + NADPH + H(+). Its pathway is amino-acid biosynthesis; L-lysine biosynthesis via DAP pathway; (S)-tetrahydrodipicolinate from L-aspartate: step 4/4. Functionally, catalyzes the conversion of 4-hydroxy-tetrahydrodipicolinate (HTPA) to tetrahydrodipicolinate. The protein is 4-hydroxy-tetrahydrodipicolinate reductase of Thermosipho africanus (strain TCF52B).